Consider the following 215-residue polypeptide: Adenylate kinase (215 aa).

10 to 15 (GAGKGT) serves as a coordination point for ATP. The NMP stretch occupies residues 30–59 (STGDMFRKAIKDETDLGKEAKSYMDRGELV). Residues T31, R36, 57–59 (ELV), 85–88 (GFPR), and Q92 each bind AMP. The tract at residues 126-163 (GRRICEKCGTTYHLVFNPPKVDGICDIDGGKLYQREDD) is LID. An ATP-binding site is contributed by R127. Positions 130 and 133 each coordinate Zn(2+). 136-137 (TY) is a binding site for ATP. C150 and D153 together coordinate Zn(2+). R160 and R171 together coordinate AMP. Residue K199 participates in ATP binding.

It belongs to the adenylate kinase family. As to quaternary structure, monomer.

The protein resides in the cytoplasm. The catalysed reaction is AMP + ATP = 2 ADP. It participates in purine metabolism; AMP biosynthesis via salvage pathway; AMP from ADP: step 1/1. In terms of biological role, catalyzes the reversible transfer of the terminal phosphate group between ATP and AMP. Plays an important role in cellular energy homeostasis and in adenine nucleotide metabolism. The sequence is that of Adenylate kinase from Staphylococcus epidermidis (strain ATCC 35984 / DSM 28319 / BCRC 17069 / CCUG 31568 / BM 3577 / RP62A).